The primary structure comprises 156 residues: MTIHHDLRPTLNLIRLANGEGLDLPAYESKGAAGMDLRAAVDEAAPLTLQPGKRALVPTGFIFEIPEGFEGQVRPRSGLAFKHGITCLNSPGTVDSDYRGEVKVLLANLGDEAFTVERGMRIAQMVIAPVTQMRVAESAAASETTRGAGGFGSTGV.

Residues 76 to 78, Asn-89, 93 to 95, and Lys-103 each bind substrate; these read RSG and TVD.

Belongs to the dUTPase family. Mg(2+) is required as a cofactor.

The enzyme catalyses dUTP + H2O = dUMP + diphosphate + H(+). It participates in pyrimidine metabolism; dUMP biosynthesis; dUMP from dCTP (dUTP route): step 2/2. In terms of biological role, this enzyme is involved in nucleotide metabolism: it produces dUMP, the immediate precursor of thymidine nucleotides and it decreases the intracellular concentration of dUTP so that uracil cannot be incorporated into DNA. This is Deoxyuridine 5'-triphosphate nucleotidohydrolase from Rhizobium leguminosarum bv. trifolii (strain WSM2304).